A 262-amino-acid polypeptide reads, in one-letter code: MQYKTKAKKSLGQNFLQDENIIRKIVQLANIKKHDIVVEIGPGLGALTRYLLSSSNNVSVVEFDASVIDTLIANCQKYGTPHIYNQDFLKFDISSLENSSNQKIKLIGNLPYNISSPILFKVIKDSDKIVDAHFMLQKEVVERIVSLPNSKSSGRLSVILQYHFDCSMILKIPPEVFYPQPKVDSAILRLKPKNSKELLKNYNFFEEIVKQSFAQRRKTLHNNLKSILKERKIDPSTLPVDTNLRAENLSVGDFVSLANFLS.

Asn14, Leu16, Gly41, Glu62, Asp87, and Asn109 together coordinate S-adenosyl-L-methionine.

This sequence belongs to the class I-like SAM-binding methyltransferase superfamily. rRNA adenine N(6)-methyltransferase family. RsmA subfamily.

It is found in the cytoplasm. The catalysed reaction is adenosine(1518)/adenosine(1519) in 16S rRNA + 4 S-adenosyl-L-methionine = N(6)-dimethyladenosine(1518)/N(6)-dimethyladenosine(1519) in 16S rRNA + 4 S-adenosyl-L-homocysteine + 4 H(+). In terms of biological role, specifically dimethylates two adjacent adenosines (A1518 and A1519) in the loop of a conserved hairpin near the 3'-end of 16S rRNA in the 30S particle. May play a critical role in biogenesis of 30S subunits. The polypeptide is Ribosomal RNA small subunit methyltransferase A (Francisella tularensis subsp. tularensis (strain FSC 198)).